The following is a 275-amino-acid chain: Ribosomal protein L11 methyltransferase (275 aa).

Residues Thr-123, Gly-146, Asp-167, and Asn-208 each coordinate S-adenosyl-L-methionine.

Belongs to the methyltransferase superfamily. PrmA family.

It localises to the cytoplasm. The catalysed reaction is L-lysyl-[protein] + 3 S-adenosyl-L-methionine = N(6),N(6),N(6)-trimethyl-L-lysyl-[protein] + 3 S-adenosyl-L-homocysteine + 3 H(+). Functionally, methylates ribosomal protein L11. This Campylobacter fetus subsp. fetus (strain 82-40) protein is Ribosomal protein L11 methyltransferase.